A 739-amino-acid polypeptide reads, in one-letter code: Polyribonucleotide nucleotidyltransferase (739 aa).

Residues D487 and D493 each coordinate Mg(2+). Positions 554–613 (PRIETMQIPTDKIRDVIGTGGKVIREIVEKTGAKINIEDTGVVKIASADGKAIKAAYNWI) constitute a KH domain. Positions 623–691 (GVIYDGTIVK…DRGKIRLSMK (69 aa)) constitute an S1 motif domain. The segment at 694–739 (DQQTGEDITDKIKAQRDAERAERGDEPREPREGGRHRGERRREAGE) is disordered. A compositionally biased stretch (basic and acidic residues) spans 701–739 (ITDKIKAQRDAERAERGDEPREPREGGRHRGERRREAGE).

The protein belongs to the polyribonucleotide nucleotidyltransferase family. Mg(2+) is required as a cofactor.

It is found in the cytoplasm. The catalysed reaction is RNA(n+1) + phosphate = RNA(n) + a ribonucleoside 5'-diphosphate. Functionally, involved in mRNA degradation. Catalyzes the phosphorolysis of single-stranded polyribonucleotides processively in the 3'- to 5'-direction. The polypeptide is Polyribonucleotide nucleotidyltransferase (Methylobacterium radiotolerans (strain ATCC 27329 / DSM 1819 / JCM 2831 / NBRC 15690 / NCIMB 10815 / 0-1)).